The chain runs to 197 residues: Beta-crystallin A2 (197 aa).

Residues methionine 1–proline 11 are N-terminal arm. Beta/gamma crystallin 'Greek key' domains are found at residues alanine 12–asparagine 52 and glycine 53–leucine 99. The segment at cysteine 100–aspartate 105 is connecting peptide. Beta/gamma crystallin 'Greek key' domains are found at residues serine 106–serine 147 and glycine 148–glutamine 196.

The protein belongs to the beta/gamma-crystallin family. Homo/heterodimer, or complexes of higher-order. The structure of beta-crystallin oligomers seems to be stabilized through interactions between the N-terminal arms.

Functionally, crystallins are the dominant structural components of the vertebrate eye lens. The sequence is that of Beta-crystallin A2 (CRYBA2) from Bos taurus (Bovine).